Here is a 723-residue protein sequence, read N- to C-terminus: Probable alpha-fucosidase A (723 aa).

Positions Met-1–Ala-15 are cleaved as a signal peptide. Asn-77, Asn-98, Asn-117, Asn-171, Asn-194, Asn-243, Asn-334, Asn-558, Asn-566, and Asn-595 each carry an N-linked (GlcNAc...) asparagine glycan.

It belongs to the glycosyl hydrolase 95 family.

The protein localises to the secreted. The enzyme catalyses an alpha-L-fucoside + H2O = L-fucose + an alcohol. Its function is as follows. Alpha-fucosidase involved in degradation of fucosylated xyloglucans. Hydrolyzes alpha-1,2-linked fucose. The polypeptide is Probable alpha-fucosidase A (afcA) (Aspergillus oryzae (strain ATCC 42149 / RIB 40) (Yellow koji mold)).